Here is a 525-residue protein sequence, read N- to C-terminus: GMP synthase [glutamine-hydrolyzing] (525 aa).

The Glutamine amidotransferase type-1 domain maps to 9 to 207; that stretch reads RILILDFGSQ…VRDICQCEAL (199 aa). The Nucleophile role is filled by Cys-86. Catalysis depends on residues His-181 and Glu-183. The GMPS ATP-PPase domain maps to 208–400; it reads WTPAKIIDDA…LGLPYDMLYR (193 aa). 235 to 241 provides a ligand contact to ATP; sequence SGGVDSS.

As to quaternary structure, homodimer.

The catalysed reaction is XMP + L-glutamine + ATP + H2O = GMP + L-glutamate + AMP + diphosphate + 2 H(+). It participates in purine metabolism; GMP biosynthesis; GMP from XMP (L-Gln route): step 1/1. Functionally, catalyzes the synthesis of GMP from XMP. The chain is GMP synthase [glutamine-hydrolyzing] from Klebsiella pneumoniae subsp. pneumoniae (strain ATCC 700721 / MGH 78578).